Here is a 475-residue protein sequence, read N- to C-terminus: Ribulose bisphosphate carboxylase large chain (475 aa).

A propeptide spanning residues 1-2 (MS) is cleaved from the precursor. Pro-3 carries the N-acetylproline modification. Position 14 is an N6,N6,N6-trimethyllysine (Lys-14). Positions 123 and 173 each coordinate substrate. Lys-175 (proton acceptor) is an active-site residue. A substrate-binding site is contributed by Lys-177. Positions 201, 203, and 204 each coordinate Mg(2+). Residue Lys-201 is modified to N6-carboxylysine. The Proton acceptor role is filled by His-294. Arg-295, His-327, and Ser-379 together coordinate substrate.

This sequence belongs to the RuBisCO large chain family. Type I subfamily. As to quaternary structure, heterohexadecamer of 8 large chains and 8 small chains; disulfide-linked. The disulfide link is formed within the large subunit homodimers. It depends on Mg(2+) as a cofactor. The disulfide bond which can form in the large chain dimeric partners within the hexadecamer appears to be associated with oxidative stress and protein turnover.

The protein resides in the plastid. The protein localises to the chloroplast. It catalyses the reaction 2 (2R)-3-phosphoglycerate + 2 H(+) = D-ribulose 1,5-bisphosphate + CO2 + H2O. It carries out the reaction D-ribulose 1,5-bisphosphate + O2 = 2-phosphoglycolate + (2R)-3-phosphoglycerate + 2 H(+). Functionally, ruBisCO catalyzes two reactions: the carboxylation of D-ribulose 1,5-bisphosphate, the primary event in carbon dioxide fixation, as well as the oxidative fragmentation of the pentose substrate in the photorespiration process. Both reactions occur simultaneously and in competition at the same active site. This Calycanthus floridus var. glaucus (Eastern sweetshrub) protein is Ribulose bisphosphate carboxylase large chain.